A 173-amino-acid chain; its full sequence is Ribosome maturation factor RimM (173 aa).

The region spanning 97–170 (EHEYYYHEII…RIRVHIMEGL (74 aa)) is the PRC barrel domain.

Belongs to the RimM family. In terms of assembly, binds ribosomal protein uS19.

The protein localises to the cytoplasm. An accessory protein needed during the final step in the assembly of 30S ribosomal subunit, possibly for assembly of the head region. Essential for efficient processing of 16S rRNA. May be needed both before and after RbfA during the maturation of 16S rRNA. It has affinity for free ribosomal 30S subunits but not for 70S ribosomes. This Shouchella clausii (strain KSM-K16) (Alkalihalobacillus clausii) protein is Ribosome maturation factor RimM.